Consider the following 244-residue polypeptide: tRNA (guanine-N(1)-)-methyltransferase (244 aa).

Residues glycine 120 and 140–145 (IGDYIL) each bind S-adenosyl-L-methionine.

It belongs to the RNA methyltransferase TrmD family. Homodimer.

Its subcellular location is the cytoplasm. The catalysed reaction is guanosine(37) in tRNA + S-adenosyl-L-methionine = N(1)-methylguanosine(37) in tRNA + S-adenosyl-L-homocysteine + H(+). In terms of biological role, specifically methylates guanosine-37 in various tRNAs. The chain is tRNA (guanine-N(1)-)-methyltransferase from Brucella canis (strain ATCC 23365 / NCTC 10854 / RM-666).